The primary structure comprises 315 residues: 2-oxoglutarate and iron-dependent oxygenase domain-containing protein 3 (315 aa).

A disordered region spans residues 1–31 (MAPQRRGPPRIPEGSSAAERRRATSTKKDRL). The Cytoplasmic portion of the chain corresponds to 1-41 (MAPQRRGPPRIPEGSSAAERRRATSTKKDRLPREAQRTWLR). A compositionally biased stretch (basic and acidic residues) spans 18–31 (AERRRATSTKKDRL). The chain crosses the membrane as a helical; Signal-anchor for type II membrane protein span at residues 42–62 (IVAFGVGLALVTCLLWSSVGI). Over 63-315 (DDDVAEVVAR…DHGIEDPVLT (253 aa)) the chain is Lumenal. One can recognise a Fe2OG dioxygenase domain in the interval 203–305 (KPTFFSRINS…AITIAFTCNP (103 aa)). Asn-211 carries an N-linked (GlcNAc...) asparagine glycan. His-226 and Asp-228 together coordinate Fe cation. The N-linked (GlcNAc...) asparagine glycan is linked to Asn-263. Residue His-284 participates in Fe cation binding. The active site involves Arg-294. Arg-294 serves as a coordination point for 2-oxoglutarate.

The protein belongs to the OGFOD3 family. Requires Fe(2+) as cofactor. L-ascorbate is required as a cofactor.

The protein localises to the membrane. This is 2-oxoglutarate and iron-dependent oxygenase domain-containing protein 3 (Ogfod3) from Mus musculus (Mouse).